Consider the following 360-residue polypeptide: Peptide chain release factor 1 (360 aa).

N5-methylglutamine is present on Gln-235.

Belongs to the prokaryotic/mitochondrial release factor family. Post-translationally, methylated by PrmC. Methylation increases the termination efficiency of RF1.

It localises to the cytoplasm. In terms of biological role, peptide chain release factor 1 directs the termination of translation in response to the peptide chain termination codons UAG and UAA. The protein is Peptide chain release factor 1 of Burkholderia cenocepacia (strain HI2424).